The following is an 866-amino-acid chain: MNGEQQLDADAGSGMEEVELSWEDYLEETGSTAVPYGSFKHVDTRLQNGFAPGMKLEVAVRTDPETYWVATVITTCEQLLLLRYDGYGEDRRADFWCDIRKADLYPIGWCEQNKKTLEAPEGIRDKVSDWDEFLRQTLIGACSPPVPLLEGLRNGRNPLDLIAPGSRLECQAFQDSLSTWIVTVVENIGGRLKLRYEGLESSDNYEHWLYYLDPFLHHVGWAAQQGYELQPPSAIRHLKNEAEWQEILAKVKEEEEEPLPSYLFKDKQVIGIHTFSVNMKLEAVDPWSPFGISPATVVKVFDEKYFLVEMDDLRPENHARRSFVCHADSPGIFPVQWSLKNGLHISPPPGYPSQDFDWADYLKQCGAEAAPQRCFPPLISEHEFKENMKLEAVNPILPEEVCVATITAVRGSYLWLQLEGSKKPIPECIVSVESMDIFPLGWCETNGHPLSTPRRARVYKQRKIAVVQPEKQVPSSRTVHEGLRNQELNSTESVMINGKYCCPKIYFNHRCFSGPYLNKGRIAELPQCVGPGNCVLVLREVLTLLINAAYKPSRVLRELQLDKDSVWHGCGEVLKAKYKGKSYRATVEIVKTADRVTEFCRQTCIKLECCPNLFGPRMVLDKCSENCSVLTKTKYTHYYGKKKNKRIGRPPGGHSNLACALKKASKRRKRRKNVFVHKKKRSSASVDNTPAGSPQGSGGEDEDDPDEGDDDSLSEGSTSEQQDELQEESEMSEKKSCSSSPTQSEISTSLPPDRQRRKRELRTFSFSDDENKPPSPKEIRIEVAERLHLDSNPLKWSVADVVRFIRSTDCAPLARIFLDQEIDGQALLLLTLPTVQECMDLKLGPAIKLCHHIERIKFAFYEQFAN.

MBT repeat units follow at residues 20–120 (LSWE…LEAP), 128–232 (SDWD…LQPP), 242–348 (AEWQ…ISPP), and 356–453 (FDWA…LSTP). The tract at residues 34-42 (VPYGSFKHV) is antigenic epitope. The interval 641 to 777 (KKKNKRIGRP…DDENKPPSPK (137 aa)) is disordered. Basic residues predominate over residues 663-682 (KASKRRKRRKNVFVHKKKRS). A compositionally biased stretch (polar residues) spans 683 to 694 (SASVDNTPAGSP). Composition is skewed to acidic residues over residues 699–713 (GEDE…DDSL) and 721–730 (QQDELQEESE). Low complexity predominate over residues 737–749 (CSSSPTQSEISTS). 2 positions are modified to phosphoserine: S767 and S775. The SAM domain occupies 796–864 (WSVADVVRFI…RIKFAFYEQF (69 aa)).

Interacts with MYOD1. Component of the SLC (SFMBT1-LSD1-CoREST) corepressor complex, which also contains KDM1A/LSD1 and RCOR1/CoREST. Interacts with KDM1A/LSD1 and RCOR1/CoREST. Interacts with L3MBTL3. As to expression, expressed in all cell lines and normal tissues tested, including the thymus.

It is found in the nucleus. Histone-binding protein, which is part of various corepressor complexes. Mediates the recruitment of corepressor complexes to target genes, followed by chromatin compaction and repression of transcription. Plays a role during myogenesis: required for the maintenance of undifferentiated states of myogenic progenitor cells via interaction with MYOD1. Interaction with MYOD1 leads to the recruitment of associated corepressors and silencing of MYOD1 target genes. Part of the SLC complex in germ cells, where it may play a role during spermatogenesis. The polypeptide is Scm-like with four MBT domains protein 1 (SFMBT1) (Homo sapiens (Human)).